The chain runs to 122 residues: Cofilin-5 (122 aa).

Residues 3–122 (SRIIEIDPNC…VKDLIQLSNL (120 aa)) form the ADF-H domain.

Belongs to the actin-binding proteins ADF family.

The protein localises to the cytoplasm. Its subcellular location is the cytoskeleton. Functionally, controls actin polymerization and depolymerization. This Dictyostelium discoideum (Social amoeba) protein is Cofilin-5 (cofF).